Reading from the N-terminus, the 180-residue chain is Large ribosomal subunit protein uL6 (180 aa).

The protein belongs to the universal ribosomal protein uL6 family. As to quaternary structure, part of the 50S ribosomal subunit.

This protein binds to the 23S rRNA, and is important in its secondary structure. It is located near the subunit interface in the base of the L7/L12 stalk, and near the tRNA binding site of the peptidyltransferase center. This is Large ribosomal subunit protein uL6 from Thermus thermophilus (strain ATCC BAA-163 / DSM 7039 / HB27).